Here is a 108-residue protein sequence, read N- to C-terminus: uncharacterized protein (108 aa).

The span at 1 to 10 (MDMLHNKCSD) shows a compositional bias: basic and acidic residues. Residues 1–27 (MDMLHNKCSDAIKSTSNSNLSNEVDKQ) are disordered. Residues 12–22 (IKSTSNSNLSN) are compositionally biased toward polar residues.

This is an uncharacterized protein from Saccharomyces cerevisiae (strain ATCC 204508 / S288c) (Baker's yeast).